The following is a 159-amino-acid chain: ATP synthase subunit b (159 aa).

A helical transmembrane segment spans residues 7-27 (TFVWTIINFLLLLVVLSYFLF).

The protein belongs to the ATPase B chain family. As to quaternary structure, F-type ATPases have 2 components, F(1) - the catalytic core - and F(0) - the membrane proton channel. F(1) has five subunits: alpha(3), beta(3), gamma(1), delta(1), epsilon(1). F(0) has three main subunits: a(1), b(2) and c(10-14). The alpha and beta chains form an alternating ring which encloses part of the gamma chain. F(1) is attached to F(0) by a central stalk formed by the gamma and epsilon chains, while a peripheral stalk is formed by the delta and b chains.

Its subcellular location is the cell membrane. In terms of biological role, f(1)F(0) ATP synthase produces ATP from ADP in the presence of a proton or sodium gradient. F-type ATPases consist of two structural domains, F(1) containing the extramembraneous catalytic core and F(0) containing the membrane proton channel, linked together by a central stalk and a peripheral stalk. During catalysis, ATP synthesis in the catalytic domain of F(1) is coupled via a rotary mechanism of the central stalk subunits to proton translocation. Its function is as follows. Component of the F(0) channel, it forms part of the peripheral stalk, linking F(1) to F(0). In Clostridium novyi (strain NT), this protein is ATP synthase subunit b.